The following is a 254-amino-acid chain: Probable derlin-2 homolog (254 aa).

Over 1 to 17 (MAQPFEDWYKNLPIVTK) the chain is Cytoplasmic. Residues 18-38 (IYMTGCVVTSVSVYLGLVGPL) form a helical membrane-spanning segment. Over 39–95 (RLYLNFPLVFGKYEFWRLFTNFFFYDEIGMNFFFHMYFLVRHSRLLEESSFRGRSAD) the chain is Lumenal. Residues 96–116 (YLFMWIFGSFLLLIMDAFLFY) form a helical membrane-spanning segment. The Cytoplasmic segment spans residues 117–118 (TK). The chain crosses the membrane as a helical span at residues 119–139 (IVTKVLFLAPSIAFMVIYVWS). The Lumenal segment spans residues 140–146 (RRNPNMH). A helical membrane pass occupies residues 147–167 (ISFLGLFTFSAPYLPWVILIM). Topologically, residues 168–254 (GYLFNHDLTT…FLNEDDLDQQ (87 aa)) are cytoplasmic.

The protein belongs to the derlin family.

The protein resides in the endoplasmic reticulum membrane. May be involved in the degradation process of specific misfolded endoplasmic reticulum (ER) luminal proteins. May also be involved in endoplasmic reticulum stress-induced pre-emptive quality control, a mechanism that selectively attenuates the translocation of newly synthesized proteins into the endoplasmic reticulum and reroutes them to the cytosol for proteasomal degradation. This Dictyostelium discoideum (Social amoeba) protein is Probable derlin-2 homolog (derl2).